We begin with the raw amino-acid sequence, 382 residues long: Ribosomal RNA large subunit methyltransferase G (382 aa).

Belongs to the methyltransferase superfamily. RlmG family.

The protein localises to the cytoplasm. It carries out the reaction guanosine(1835) in 23S rRNA + S-adenosyl-L-methionine = N(2)-methylguanosine(1835) in 23S rRNA + S-adenosyl-L-homocysteine + H(+). Specifically methylates the guanine in position 1835 (m2G1835) of 23S rRNA. This Aliivibrio fischeri (strain MJ11) (Vibrio fischeri) protein is Ribosomal RNA large subunit methyltransferase G.